The sequence spans 604 residues: UvrABC system protein C (604 aa).

The GIY-YIG domain occupies 13–92; that stretch reads ASPGVYLMKD…IKKYHPKYNV (80 aa). A UVR domain is found at 205–240; the sequence is SEIVQDLEKSIEKASKEQKFEQAGMYYRTLKLIQQA.

Belongs to the UvrC family. In terms of assembly, interacts with UvrB in an incision complex.

Its subcellular location is the cytoplasm. The UvrABC repair system catalyzes the recognition and processing of DNA lesions. UvrC both incises the 5' and 3' sides of the lesion. The N-terminal half is responsible for the 3' incision and the C-terminal half is responsible for the 5' incision. In Chlamydia abortus (strain DSM 27085 / S26/3) (Chlamydophila abortus), this protein is UvrABC system protein C.